A 428-amino-acid chain; its full sequence is Glutamate-1-semialdehyde 2,1-aminomutase (428 aa).

Lys267 carries the N6-(pyridoxal phosphate)lysine modification.

It belongs to the class-III pyridoxal-phosphate-dependent aminotransferase family. HemL subfamily. In terms of assembly, homodimer. The cofactor is pyridoxal 5'-phosphate.

The protein localises to the cytoplasm. It catalyses the reaction (S)-4-amino-5-oxopentanoate = 5-aminolevulinate. The protein operates within porphyrin-containing compound metabolism; protoporphyrin-IX biosynthesis; 5-aminolevulinate from L-glutamyl-tRNA(Glu): step 2/2. This chain is Glutamate-1-semialdehyde 2,1-aminomutase, found in Sulfurihydrogenibium sp. (strain YO3AOP1).